The chain runs to 304 residues: Voltage-dependent anion channel-forming protein YneE (304 aa).

4 helical membrane-spanning segments follow: residues 28-48 (LLLN…YTHL), 50-70 (IKFT…FLGF), 194-214 (VLAG…TLIL), and 220-240 (LFCI…TPFI).

The protein belongs to the anion channel-forming bestrophin (TC 1.A.46) family.

The protein localises to the cell membrane. In Escherichia coli (strain K12), this protein is Voltage-dependent anion channel-forming protein YneE (yneE).